Consider the following 96-residue polypeptide: Co-chaperonin GroES (96 aa).

The protein belongs to the GroES chaperonin family. In terms of assembly, heptamer of 7 subunits arranged in a ring. Interacts with the chaperonin GroEL.

The protein resides in the cytoplasm. Its function is as follows. Together with the chaperonin GroEL, plays an essential role in assisting protein folding. The GroEL-GroES system forms a nano-cage that allows encapsulation of the non-native substrate proteins and provides a physical environment optimized to promote and accelerate protein folding. GroES binds to the apical surface of the GroEL ring, thereby capping the opening of the GroEL channel. This Shewanella oneidensis (strain ATCC 700550 / JCM 31522 / CIP 106686 / LMG 19005 / NCIMB 14063 / MR-1) protein is Co-chaperonin GroES.